Consider the following 347-residue polypeptide: MKQTIILLYGGRSAEREVSVLSAESVMRAVNYDRFTVKTFFISQSGDFIKTQEFSHAPGQEDRLMTNETIDWDKKVAPSAIYEEGAVVFPVLHGPMGEDGSVQGFLEVLKMPYVGCNILSSSLAMDKITTKRVLESAGIAQVPYVAIVEGDDVTAKIAEVEEKLAYPVFAKPSNMGSSVGISKSENQEELRQALKLAFRYDSRVLVEQGVNAREIEVGLLGNYDVKSTLPGEVVKDVAFYDYDAKYIDNKITMDIPAKISDDVVAVMRQNAETAFRAIGGLGLSRCDFFYTDKGEIFLNELNTMPGFTQWSMYPLLWDNMGISYPELIERLVDLAKESFDKREAHLI.

The ATP-grasp domain maps to 131-333 (KRVLESAGIA…YPELIERLVD (203 aa)). Residue 161–216 (EEKLAYPVFAKPSNMGSSVGISKSENQEELRQALKLAFRYDSRVLVEQGVNAREIE) participates in ATP binding. Mg(2+)-binding residues include Asp-287, Glu-300, and Asn-302.

It belongs to the D-alanine--D-alanine ligase family. The cofactor is Mg(2+). Mn(2+) is required as a cofactor.

It is found in the cytoplasm. It catalyses the reaction 2 D-alanine + ATP = D-alanyl-D-alanine + ADP + phosphate + H(+). The protein operates within cell wall biogenesis; peptidoglycan biosynthesis. In terms of biological role, cell wall formation. In Streptococcus pneumoniae (strain P1031), this protein is D-alanine--D-alanine ligase.